The following is a 197-amino-acid chain: Imidazoleglycerol-phosphate dehydratase (197 aa).

The protein belongs to the imidazoleglycerol-phosphate dehydratase family.

Its subcellular location is the cytoplasm. It carries out the reaction D-erythro-1-(imidazol-4-yl)glycerol 3-phosphate = 3-(imidazol-4-yl)-2-oxopropyl phosphate + H2O. Its pathway is amino-acid biosynthesis; L-histidine biosynthesis; L-histidine from 5-phospho-alpha-D-ribose 1-diphosphate: step 6/9. The sequence is that of Imidazoleglycerol-phosphate dehydratase from Methanocaldococcus jannaschii (strain ATCC 43067 / DSM 2661 / JAL-1 / JCM 10045 / NBRC 100440) (Methanococcus jannaschii).